The chain runs to 181 residues: Large ribosomal subunit protein uL5 (181 aa).

This sequence belongs to the universal ribosomal protein uL5 family. As to quaternary structure, part of the 50S ribosomal subunit; part of the 5S rRNA/L5/L18/L25 subcomplex. Contacts the 5S rRNA and the P site tRNA. Forms a bridge to the 30S subunit in the 70S ribosome.

This is one of the proteins that bind and probably mediate the attachment of the 5S RNA into the large ribosomal subunit, where it forms part of the central protuberance. In the 70S ribosome it contacts protein S13 of the 30S subunit (bridge B1b), connecting the 2 subunits; this bridge is implicated in subunit movement. Contacts the P site tRNA; the 5S rRNA and some of its associated proteins might help stabilize positioning of ribosome-bound tRNAs. The sequence is that of Large ribosomal subunit protein uL5 from Mesomycoplasma hyopneumoniae (strain 232) (Mycoplasma hyopneumoniae).